The primary structure comprises 456 residues: Probable glycine dehydrogenase (decarboxylating) subunit 1 (456 aa).

The protein belongs to the GcvP family. N-terminal subunit subfamily. As to quaternary structure, the glycine cleavage system is composed of four proteins: P, T, L and H. In this organism, the P 'protein' is a heterodimer of two subunits.

The catalysed reaction is N(6)-[(R)-lipoyl]-L-lysyl-[glycine-cleavage complex H protein] + glycine + H(+) = N(6)-[(R)-S(8)-aminomethyldihydrolipoyl]-L-lysyl-[glycine-cleavage complex H protein] + CO2. Its function is as follows. The glycine cleavage system catalyzes the degradation of glycine. The P protein binds the alpha-amino group of glycine through its pyridoxal phosphate cofactor; CO(2) is released and the remaining methylamine moiety is then transferred to the lipoamide cofactor of the H protein. In Legionella pneumophila subsp. pneumophila (strain Philadelphia 1 / ATCC 33152 / DSM 7513), this protein is Probable glycine dehydrogenase (decarboxylating) subunit 1.